The following is a 266-amino-acid chain: Indole-3-glycerol phosphate synthase (266 aa).

Belongs to the TrpC family.

It catalyses the reaction 1-(2-carboxyphenylamino)-1-deoxy-D-ribulose 5-phosphate + H(+) = (1S,2R)-1-C-(indol-3-yl)glycerol 3-phosphate + CO2 + H2O. Its pathway is amino-acid biosynthesis; L-tryptophan biosynthesis; L-tryptophan from chorismate: step 4/5. The sequence is that of Indole-3-glycerol phosphate synthase from Variovorax paradoxus (strain S110).